The primary structure comprises 482 residues: MSGFRGLVPELENSLWSSPTTSCMSKMCWWLLWGILHTCPTQASVLLAQQSPQQLTSPGYPEPYLKGQESHTDIEAPEGFAVRLTFQDFDLEPSPDCEGDSVTISTGGTDATRLCGRQGSPLGNPPGHREFVSSGRSLRLTFQAHSSSKSKITHLHKGFLALYQAVAVNQPNGDTEAVTTPGAPKIQNHCQDPYYKADQTGTLSCPSSWKWKDRQDGGEVPECVPVCGRPVVPLAENPNTFGSSRAKLGNFPWQAFTSIYGRGGGALLGDRWILTAAHTIYPKDSIYLRRNQNVEVFLGHTDIDELLKLGNHPVRRVVVHPDYRQHESHNFNGDIALLELEQRVPLGPNLLPVCLPDNETLYHSGLWGYVSGFGVEMGWLTTKLKYSKLPVAPREACEAWLHQRQRTEVFSDNMFCVGEEMQVNSVCQGDSGSVYVVWDDLALRWVATGIVSWGIGCGKGYGFYTKVLSYMDWIKRVIEGKD.

A signal peptide spans 1-43; it reads MSGFRGLVPELENSLWSSPTTSCMSKMCWWLLWGILHTCPTQA. Positions 44–166 constitute a CUB domain; it reads SVLLAQQSPQ…KGFLALYQAV (123 aa). 2 disulfide bridges follow: Cys-97–Cys-115 and Cys-190–Cys-223. Residues 166 to 225 enclose the Sushi domain; sequence VAVNQPNGDTEAVTTPGAPKIQNHCQDPYYKADQTGTLSCPSSWKWKDRQDGGEVPECVP. Positions 240–479 constitute a Peptidase S1 domain; it reads TFGSSRAKLG…YMDWIKRVIE (240 aa). Catalysis depends on charge relay system residues His-278 and Asp-334. The N-linked (GlcNAc...) asparagine glycan is linked to Asn-358. Cystine bridges form between Cys-397–Cys-416 and Cys-427–Cys-457. Ser-431 acts as the Charge relay system in catalysis.

This sequence belongs to the peptidase S1 family. As to expression, expressed in liver (at protein level).

Its subcellular location is the secreted. Its function is as follows. Mediates the proteolytic cleavage of HP/haptoglobin in the endoplasmic reticulum. In Mus musculus (Mouse), this protein is Complement C1r subcomponent-like protein (C1rl).